Here is a 638-residue protein sequence, read N- to C-terminus: Chaperone protein DnaK (638 aa).

A Phosphothreonine; by autocatalysis modification is found at Thr198. Disordered regions lie at residues 539–559 and 602–638; these read DGLA…LASD and QAKA…DDKK. The span at 611–623 shows a compositional bias: basic and acidic residues; that stretch reads GQAHDAGQEKPAD. The segment covering 624–638 has biased composition (acidic residues); that stretch reads DVVDAEFEEVKDDKK.

The protein belongs to the heat shock protein 70 family.

Functionally, acts as a chaperone. The protein is Chaperone protein DnaK of Shewanella frigidimarina (strain NCIMB 400).